Reading from the N-terminus, the 275-residue chain is N-(5'-phosphoribosyl)anthranilate isomerase 1, chloroplastic (275 aa).

The transit peptide at 1-32 directs the protein to the chloroplast; that stretch reads MSTGISTDLHVHFGALNFSKTYKSGLSNRTVS.

It belongs to the TrpF family. As to expression, expressed in roots and shoots.

Its subcellular location is the plastid. The protein localises to the chloroplast. It catalyses the reaction N-(5-phospho-beta-D-ribosyl)anthranilate = 1-(2-carboxyphenylamino)-1-deoxy-D-ribulose 5-phosphate. The protein operates within amino-acid biosynthesis; L-tryptophan biosynthesis; L-tryptophan from chorismate: step 3/5. In terms of biological role, catalyzes the conversion of 5-phosphoribosylanthranilate to l-(O-carboxyphenylamino)-l-deoxyribulose-5-phosphate, which is the third step of the tryptophan biosynthetic pathway. The polypeptide is N-(5'-phosphoribosyl)anthranilate isomerase 1, chloroplastic (PAI1) (Arabidopsis thaliana (Mouse-ear cress)).